Reading from the N-terminus, the 175-residue chain is Peptide deformylase (175 aa).

2 residues coordinate Fe cation: cysteine 96 and histidine 138. Glutamate 139 is a catalytic residue. Fe cation is bound at residue histidine 142.

It belongs to the polypeptide deformylase family. Fe(2+) is required as a cofactor.

The enzyme catalyses N-terminal N-formyl-L-methionyl-[peptide] + H2O = N-terminal L-methionyl-[peptide] + formate. Functionally, removes the formyl group from the N-terminal Met of newly synthesized proteins. Requires at least a dipeptide for an efficient rate of reaction. N-terminal L-methionine is a prerequisite for activity but the enzyme has broad specificity at other positions. In Rhodopseudomonas palustris (strain BisB5), this protein is Peptide deformylase.